The primary structure comprises 455 residues: GTPase Der (455 aa).

2 EngA-type G domains span residues 4–169 (PVVA…PPKS) and 178–353 (IQLA…EQHR). GTP contacts are provided by residues 10–17 (GRPNVGKS), 57–61 (DTGGL), 120–123 (NKCE), 184–191 (GRPNVGKS), 231–235 (DTAGI), and 296–299 (NKWD). Positions 354–439 (RRVSTSVVNE…PLKLFWRGKQ (86 aa)) constitute a KH-like domain.

This sequence belongs to the TRAFAC class TrmE-Era-EngA-EngB-Septin-like GTPase superfamily. EngA (Der) GTPase family. As to quaternary structure, associates with the 50S ribosomal subunit.

GTPase that plays an essential role in the late steps of ribosome biogenesis. The sequence is that of GTPase Der from Synechococcus sp. (strain WH7803).